We begin with the raw amino-acid sequence, 473 residues long: Bifunctional NAD(P)H-hydrate repair enzyme Nnr (473 aa).

The NAD(P)H-hydrate epimerase stretch occupies residues 1 to 211 (MRHYYSVDTI…AHTDVLGFEA (211 aa)). Residues 10-205 (IRAAEAPLLA…DIGLDLAHTD (196 aa)) form the YjeF N-terminal domain. Residues 62-66 (DNGGD) form an NADPHX 1; for epimerase activity region. K(+) is bound by residues N63 and D119. An NADPHX 1; for epimerase activity region spans residues 123–129 (GISGSGP). D152 lines the (6S)-NADPHX pocket. Residue S155 coordinates K(+). Residues 210-473 (EATDVAARWP…GHIRAALAAL (264 aa)) form the YjeF C-terminal domain. The segment at 211–473 (ATDVAARWPV…GHIRAALAAL (263 aa)) is ADP-dependent (S)-NAD(P)H-hydrate dehydratase. G298 is a binding site for (6S)-NADPHX. The segment at 348 to 354 (HAGEFAR) is NADPHX 2; for dehydratase activity. Residues 382 to 386 (KGNVT) and 402 to 411 (QSWAATAGSG) each bind ADP. Position 412 (D412) interacts with (6S)-NADPHX.

In the N-terminal section; belongs to the NnrE/AIBP family. It in the C-terminal section; belongs to the NnrD/CARKD family. K(+) serves as cofactor.

The catalysed reaction is (6S)-NADHX + ADP = AMP + phosphate + NADH + H(+). The enzyme catalyses (6S)-NADPHX + ADP = AMP + phosphate + NADPH + H(+). It catalyses the reaction (6R)-NADHX = (6S)-NADHX. It carries out the reaction (6R)-NADPHX = (6S)-NADPHX. Functionally, bifunctional enzyme that catalyzes the epimerization of the S- and R-forms of NAD(P)HX and the dehydration of the S-form of NAD(P)HX at the expense of ADP, which is converted to AMP. This allows the repair of both epimers of NAD(P)HX, a damaged form of NAD(P)H that is a result of enzymatic or heat-dependent hydration. In Mycobacterium tuberculosis (strain CDC 1551 / Oshkosh), this protein is Bifunctional NAD(P)H-hydrate repair enzyme Nnr (nnr).